The primary structure comprises 431 residues: CinA-like protein (431 aa).

It belongs to the CinA family.

In Chlorobium luteolum (strain DSM 273 / BCRC 81028 / 2530) (Pelodictyon luteolum), this protein is CinA-like protein.